The sequence spans 161 residues: MARQKKYSGKGGARKKNKQKQSVAPRRRVEFRYKGFTLEELQEMPIKKFMEIVPSRQRRTMLRGITPNQRKLVMKIKKARRLTNRGKEPRVIRTHCRDFVITPEMIGLTFGIYNGKEFKDVTLVEETVGRFLGEMAPTRAVVQHGSPGMGATRGSMFVPIK.

Over residues 1–19 (MARQKKYSGKGGARKKNKQ) the composition is skewed to basic residues. The disordered stretch occupies residues 1-26 (MARQKKYSGKGGARKKNKQKQSVAPR).

The protein belongs to the universal ribosomal protein uS19 family.

Functionally, protein S19 forms a complex with S13 that binds strongly to the 16S ribosomal RNA. This is Small ribosomal subunit protein uS19 from Methanococcus maripaludis (strain C6 / ATCC BAA-1332).